The following is a 131-amino-acid chain: MKLLLTLLLGSALMCITLADECGLGTHRPVKEVIDNVRTMYYCDCRAGDAERSITVSRCDDNNQKQDDVILTYCGLEQTTGCNTNPYTAAKHDSSGDKPQFYCSCLNYKYEQSHADSRYWTIRCYMGDICD.

An N-terminal signal peptide occupies residues 1 to 19; the sequence is MKLLLTLLLGSALMCITLA. Positions 20–38 are excised as a propeptide; sequence DECGLGTHRPVKEVIDNVR.

Post-translationally, contains 4 disulfide bonds. Expressed by the venom duct.

It localises to the secreted. Its function is as follows. Probable neurotoxin with unknown target. Possibly targets ion channels. The polypeptide is Conotoxin Cal8.2 (Californiconus californicus (California cone)).